The following is a 317-amino-acid chain: MGQKPKIAIFGGGTGLSVLLRGLKHKPVDITAIVTVADDGGSSGRLRNELKIPPPGDIRNVLAALSDVEPLVEDLFQHRFNKGNDLTGHSLGNLILAAMTNITGDFFHAVTEMSKVLNVRGKVLPAANASVVLHAEMEDGRVVSGESTIPEYGQRIKRVFLTPEQIDPLPETIDVIREADLIIIGPGSLYTSILPNLLVPKIGEEVIKAPAKKVYICNVMTQPGETLHYTAADHVKALNQHMGCGFIDTILVNSEDIPDEIKRKYEMESARPVDFDIEELKAMGLEVIRDQIVTYKNDVIRHDTHKVASLLVDLLKE.

This sequence belongs to the gluconeogenesis factor family.

The protein resides in the cytoplasm. Its function is as follows. Required for morphogenesis under gluconeogenic growth conditions. Required, in gluconeogenic growth conditions, for the correct localization of PBP1 and hence for displaying a normal rod shape. The sequence is that of Gluconeogenesis factor (mgfK) from Bacillus subtilis (strain 168).